Consider the following 115-residue polypeptide: Inner membrane protein YidH (115 aa).

The Cytoplasmic segment spans residues 1 to 30 (MKISRLGEAPDYRFSLANERTFLAWIRTAL). The helical transmembrane segment at 31 to 51 (GFLAAGVGLDQLAPDFATPVI) threads the bilayer. Over 52–53 (RE) the chain is Periplasmic. A helical membrane pass occupies residues 54-74 (LLALLLCLFSGGLAMYGYLRW). Residues 75 to 92 (LRNEKAMRLKEDLPYTNS) lie on the Cytoplasmic side of the membrane. The chain crosses the membrane as a helical span at residues 93–113 (LLIISLILMVVAVIVMGLVLY). The Periplasmic segment spans residues 114-115 (AG).

To M.tuberculosis Rv2272.

Its subcellular location is the cell inner membrane. The protein is Inner membrane protein YidH (yidH) of Escherichia coli O157:H7.